A 164-amino-acid chain; its full sequence is 6,7-dimethyl-8-ribityllumazine synthase 1 (164 aa).

5-amino-6-(D-ribitylamino)uracil is bound by residues F27, 58 to 60 (SLE), and 87 to 89 (TII). 92–93 (DT) is a (2S)-2-hydroxy-3-oxobutyl phosphate binding site. H95 acts as the Proton donor in catalysis. Position 120 (N120) interacts with 5-amino-6-(D-ribitylamino)uracil. R134 is a binding site for (2S)-2-hydroxy-3-oxobutyl phosphate.

The protein belongs to the DMRL synthase family. In terms of assembly, homopentamer.

It catalyses the reaction (2S)-2-hydroxy-3-oxobutyl phosphate + 5-amino-6-(D-ribitylamino)uracil = 6,7-dimethyl-8-(1-D-ribityl)lumazine + phosphate + 2 H2O + H(+). It participates in cofactor biosynthesis; riboflavin biosynthesis; riboflavin from 2-hydroxy-3-oxobutyl phosphate and 5-amino-6-(D-ribitylamino)uracil: step 1/2. In terms of biological role, catalyzes the formation of 6,7-dimethyl-8-ribityllumazine by condensation of 5-amino-6-(D-ribitylamino)uracil with 3,4-dihydroxy-2-butanone 4-phosphate. This is the penultimate step in the biosynthesis of riboflavin. In Mesorhizobium japonicum (strain LMG 29417 / CECT 9101 / MAFF 303099) (Mesorhizobium loti (strain MAFF 303099)), this protein is 6,7-dimethyl-8-ribityllumazine synthase 1 (ribH1).